A 486-amino-acid polypeptide reads, in one-letter code: Cardiolipin synthase A (486 aa).

A run of 2 helical transmembrane segments spans residues 3 to 23 (TVYTLVSWLAILGYWLLIAGV) and 38 to 58 (MAWLLIIYILPLVGIIAYLAV). PLD phosphodiesterase domains lie at 219–246 (MDLRQHRKMIMIDNYIAYTGSMNMVDPR) and 399–426 (EGGLLHTKSVLVDGELSLVGTVNLDMRS). Catalysis depends on residues histidine 224, lysine 226, aspartate 231, histidine 404, lysine 406, and aspartate 411.

It belongs to the phospholipase D family. Cardiolipin synthase subfamily. ClsA sub-subfamily.

The protein resides in the cell inner membrane. The enzyme catalyses 2 a 1,2-diacyl-sn-glycero-3-phospho-(1'-sn-glycerol) = a cardiolipin + glycerol. Catalyzes the reversible phosphatidyl group transfer from one phosphatidylglycerol molecule to another to form cardiolipin (CL) (diphosphatidylglycerol) and glycerol. The chain is Cardiolipin synthase A from Shigella dysenteriae serotype 1 (strain Sd197).